The sequence spans 120 residues: Small ribosomal subunit protein uS13 (120 aa).

The disordered stretch occupies residues 94–120; that stretch reads GLPLRGQRTRTNARTRKGPRKAIAGKK.

This sequence belongs to the universal ribosomal protein uS13 family. Part of the 30S ribosomal subunit. Forms a loose heterodimer with protein S19. Forms two bridges to the 50S subunit in the 70S ribosome.

Located at the top of the head of the 30S subunit, it contacts several helices of the 16S rRNA. In the 70S ribosome it contacts the 23S rRNA (bridge B1a) and protein L5 of the 50S subunit (bridge B1b), connecting the 2 subunits; these bridges are implicated in subunit movement. Contacts the tRNAs in the A and P-sites. This is Small ribosomal subunit protein uS13 from Aromatoleum aromaticum (strain DSM 19018 / LMG 30748 / EbN1) (Azoarcus sp. (strain EbN1)).